The chain runs to 649 residues: tRNA-guanine(15) transglycosylase (649 aa).

The Nucleophile role is filled by aspartate 88. Residues aspartate 123 and alanine 194 each coordinate substrate. Zn(2+) contacts are provided by cysteine 280, cysteine 282, and cysteine 285. The 76-residue stretch at 573 to 648 (NYRIVIDSSV…VAATLRGGIK (76 aa)) folds into the PUA domain.

This sequence belongs to the archaeosine tRNA-ribosyltransferase family. Zn(2+) serves as cofactor.

The enzyme catalyses guanosine(15) in tRNA + 7-cyano-7-deazaguanine = 7-cyano-7-carbaguanosine(15) in tRNA + guanine. The protein operates within tRNA modification; archaeosine-tRNA biosynthesis. In terms of biological role, exchanges the guanine residue with 7-cyano-7-deazaguanine (preQ0) at position 15 in the dihydrouridine loop (D-loop) of archaeal tRNAs. The polypeptide is tRNA-guanine(15) transglycosylase (Methanococcus maripaludis (strain C5 / ATCC BAA-1333)).